We begin with the raw amino-acid sequence, 254 residues long: Alcohol dehydrogenase (254 aa).

10-33 (FVAGLGGIGLDTSREIVKSGPKNL) contributes to the NAD(+) binding site. S138 is a substrate binding site. Residue Y151 is the Proton acceptor of the active site.

Belongs to the short-chain dehydrogenases/reductases (SDR) family. As to quaternary structure, homodimer.

It carries out the reaction a primary alcohol + NAD(+) = an aldehyde + NADH + H(+). It catalyses the reaction a secondary alcohol + NAD(+) = a ketone + NADH + H(+). The sequence is that of Alcohol dehydrogenase (Adh) from Drosophila differens (Fruit fly).